A 139-amino-acid polypeptide reads, in one-letter code: METDCNPMELSSMSGFEEGSELNGFEGTDMKDMRLEAEAVVNDVLFAVNNMFVSKSLRCADDVAYINVETKERNRYCLELTEAGLKVVGYAFDQVDDHLQTPYHETVYSLLDTLSPAYREAFGNALLQRLEALKRDGQS.

The interval 1-22 (METDCNPMELSSMSGFEEGSEL) is disordered. The required for PRKAR2A interaction; contributes to a protective effect against H(2)O(2)-induced apoptosis stretch occupies residues 41–45 (VNDVL). The interval 115–139 (SPAYREAFGNALLQRLEALKRDGQS) is interaction with GSK3B and acts as a GSK3B inhibitor.

It belongs to the GSKIP family. In terms of assembly, forms a complex composed of PRKAR2A or PRKAR2B, GSK3B and GSKIP through GSKIP interaction; facilitates PKA-induced phosphorylation of GSK3B leading to GSK3B inactivation; recruits DNM1L through GSK3B for PKA-mediated phosphorylation of DNM1L; promotes beta-catenin degradation through GSK3B-induced phosphorylation of beta-catenin; stabilizes beta-catenin and enhances Wnt-induced signaling through PKA-induced phosphorylation of beta-catenin. Interacts with GSK3B; induces GSK3B-mediated phosphorylation of GSKIP and inhibits GSK3B kinase activity. Post-translationally, phosphorylated by GSK3B. As to expression, detected in heart, brain, placenta, liver, skeletal muscle, kidney, testis, lung and pancreas.

The protein localises to the cytoplasm. The protein resides in the nucleus. In terms of biological role, A-kinase anchoring protein for GSK3B and PKA that regulates or facilitates their kinase activity towards their targets. The ternary complex enhances Wnt-induced signaling by facilitating the GSK3B- and PKA-induced phosphorylation of beta-catenin leading to beta-catenin degradation and stabilization respectively. Upon cAMP activation, the ternary complex contributes to neuroprotection against oxidative stress-induced apoptosis by facilitating the PKA-induced phosphorylation of DML1 and PKA-induced inactivation of GSK3B. During neurite outgrowth promotes neuron proliferation; while increases beta-catenin-induced transcriptional activity through GSK3B kinase activity inhibition, reduces N-cadherin level to promote cell cycle progression. The sequence is that of GSK3B-interacting protein from Homo sapiens (Human).